Consider the following 658-residue polypeptide: Trimethylamine N-oxide transport system permease protein TmoV (658 aa).

The next 15 membrane-spanning stretches (helical) occupy residues leucine 20–leucine 40, isoleucine 103–glycine 123, methionine 127–alanine 147, valine 153–tryptophan 173, valine 185–phenylalanine 205, glycine 212–leucine 232, valine 273–glycine 293, methionine 300–valine 320, phenylalanine 349–isoleucine 369, phenylalanine 420–valine 440, valine 447–isoleucine 467, leucine 469–valine 489, isoleucine 517–phenylalanine 537, alanine 585–isoleucine 605, and phenylalanine 627–tryptophan 647. In terms of domain architecture, ABC transmembrane type-1 1 spans alanine 147–serine 326. The ABC transmembrane type-1 2 domain occupies serine 465–isoleucine 644.

It belongs to the binding-protein-dependent transport system permease family. As to quaternary structure, the complex is probably composed of two ATP-binding proteins (TmoW), two transmembrane proteins (TmoV) and a solute-binding protein (TmoX).

The protein resides in the cell inner membrane. Its function is as follows. Part of the ABC transporter complex TmoXWV involved in trimethylamine N-oxide (TMAO) import. Responsible for the translocation of the substrate across the membrane. Is specific for TMAO and essential for TMAO metabolism. This is Trimethylamine N-oxide transport system permease protein TmoV from Ruegeria pomeroyi (strain ATCC 700808 / DSM 15171 / DSS-3) (Silicibacter pomeroyi).